Reading from the N-terminus, the 475-residue chain is Cytochrome P450 monooxygenase sthD (475 aa).

The first 17 residues, 1 to 17, serve as a signal peptide directing secretion; sequence MAAYFLLGLYGSTLVYR. The chain crosses the membrane as a helical span at residues 276 to 296; it reads FIIIAGSDTVAATLTFAFFYL. N-linked (GlcNAc...) asparagine glycosylation occurs at Asn-336. Cys-418 lines the heme pocket.

The protein belongs to the cytochrome P450 family. The cofactor is heme.

It localises to the membrane. It catalyses the reaction betaenone A + NADPH + O2 + H(+) = stemphyloxin II + NADP(+) + H2O. It carries out the reaction betaenone C + NADPH + O2 + H(+) = stemphyloxin I + NADP(+) + H2O. Its pathway is mycotoxin biosynthesis. In terms of biological role, cytochrome P450 monooxygenase; part of the gene cluster that mediates the biosynthesis of the phytotoxin stemphyloxin II. The first step of the pathway is the synthesis of dehydroprobetaenone I by the polyketide synthase sthA and the enoyl reductase sthE via condensation of one acetyl-CoA starter unit with 7 malonyl-CoA units and 5 methylations. The C-terminal reductase (R) domain of sthA catalyzes the reductive release of the polyketide chain. Because sthA lacks a designated enoylreductase (ER) domain, the required activity is provided the enoyl reductase sthE. The short-chain dehydrogenase/reductase sthC then catalyzes reduction of dehydroprobetaenone I to probetaenone I. The cytochrome P450 monooxygenase sthF catalyzes successive epoxidation, oxidation (resulting from epoxide opening) and hydroxylation to install a tertiary alcohol in the decaline ring to yield betaenone C from dehydroprobetaenone I and betaenone B from probetaenone I. The FAD-linked oxidoreductase sthB is responsible for the conversion of betaenone C to betaenone A via an intramolecular aldol reaction between C-1 and C-17 to form the bridged tricyclic system in betaenone A. Finally, the cytochrome P450 monooxygenase sthD catalyzes the hydroxylation of C-15 to afford the final metabolite stemphyloxin II. The protein is Cytochrome P450 monooxygenase sthD of Phaeosphaeria nodorum (strain SN15 / ATCC MYA-4574 / FGSC 10173) (Glume blotch fungus).